The primary structure comprises 287 residues: Cyclopropane mycolic acid synthase MmaA2 (287 aa).

S-adenosyl-L-methionine contacts are provided by residues 33-34 (YS), 72-74 (GCG), 94-99 (TLSKNQ), 123-124 (WE), and isoleucine 136. Cysteine 269 is an active-site residue.

It belongs to the CFA/CMAS family.

It carries out the reaction a 1-acyl-2-(9Z)-enoyl-sn-glycero-3-phospholipid + S-adenosyl-L-methionine = a 1-acyl-2-(9-cyclopronane)-acyl-sn-glycero-3-phospholipid + S-adenosyl-L-homocysteine + H(+). It participates in lipid metabolism; mycolic acid biosynthesis. Catalyzes the conversion of a double bond to a cis cyclopropane ring at the distal position of an alpha mycolic acid via the transfer of a methylene group from S-adenosyl-L-methionine. MmaA2 also catalyzes the biosynthesis of the cis-cyclopropanated methoxymycolates. Cyclopropanated mycolic acids are key factors participating in cell envelope permeability, host immunomodulation and persistence. The chain is Cyclopropane mycolic acid synthase MmaA2 (mmaA2) from Mycobacterium tuberculosis (strain ATCC 25177 / H37Ra).